A 231-amino-acid polypeptide reads, in one-letter code: MALSQNQAKFSKGFVVMIWVLFIACAITSTEASLTKCQQLQASANSGLIGAYVPQCKETGEFEEKQCWGSTGYCWCVDEDGKEILGTKIRGSPDCSRRKAALTLCQMMQAIIVNVPGWCGPPSCKADGSFDEVQCCASNGECYCVDKKGKELEGTRQQGRPTCERHLSECEEARIKAHSNSLRVEMFVPECFEDGSYNPVQCWPSTGYCWCVDEGGVKVPGSDVRFKRPTC.

The N-terminal stretch at 1–32 (MALSQNQAKFSKGFVVMIWVLFIACAITSTEA) is a signal peptide. Thyroglobulin type-1 domains are found at residues 34–95 (LTKC…SPDC), 102–163 (LTLC…RPTC), and 167–231 (LSEC…RPTC). 9 cysteine pairs are disulfide-bonded: cysteine 37–cysteine 56, cysteine 67–cysteine 74, cysteine 76–cysteine 95, cysteine 105–cysteine 124, cysteine 135–cysteine 142, cysteine 144–cysteine 163, cysteine 170–cysteine 191, cysteine 202–cysteine 209, and cysteine 211–cysteine 231.

Belongs to the protease inhibitor I31 family.

The protein localises to the secreted. Potent inhibitor of papain-like cysteine proteinases (Ki=0.18-0.57 nM on papain), as well as of the aspartic proteinase cathepsin D (Ki=0.3-05 nM). The chain is Equistatin from Actinia equina (Beadlet anemone).